A 163-amino-acid chain; its full sequence is MSLLLLVVSALHILILVLLFVATLDKSWWTLPEKESLNLWYDCTWNTTAKTWACSNVSENGWLKAVQALMVLSLILCCLSFILFMIQLYTMRRGGLFYATGLCQLCTSAAVFSGALIYAIHAKEILAKHPSGGSFGYCFALAWVAFPLALVSGIIYIHLRKRE.

The helical transmembrane segment at 4–24 (LLLVVSALHILILVLLFVATL) threads the bilayer. N-linked (GlcNAc...) asparagine glycosylation is found at N46 and N56. 3 helical membrane-spanning segments follow: residues 66-86 (VQAL…LFMI), 100-120 (TGLC…IYAI), and 139-159 (FALA…YIHL).

This sequence belongs to the PMP-22/EMP/MP20 family.

It localises to the membrane. Functionally, probably involved in cell proliferation and cell-cell interactions. The protein is Epithelial membrane protein 3 (Emp3) of Rattus norvegicus (Rat).